The sequence spans 409 residues: POU domain, class 4, transcription factor 2 (409 aa).

The interval 26-93 (YSALHSTSPG…SEAMRRACLP (68 aa)) is disordered. Low complexity predominate over residues 31-52 (STSPGSSAPIAPSASSPSSSSN). The segment covering 53–69 (AGGGGGGGGGGGGGGGR) has biased composition (gly residues). Residues 91–237 (CLPTPPSNIF…MHQAALSMAH (147 aa)) are required for transcriptional activation. Positions 110-119 (RAEALAAVDI) match the POU-IV box motif. A compositionally biased stretch (low complexity) spans 153-166 (AASSSSVPISHPSA). The segment at 153-188 (AASSSSVPISHPSALAGTHHHHHHHHHHHHQPHQAL) is disordered. Residues 170 to 184 (THHHHHHHHHHHHQP) show a composition bias toward basic residues. The Nuclear speckle targeting signal motif lies at 171–185 (HHHHHHHHHHHHQPH). The tract at residues 238–409 (AHGLPSHMGC…QKRMKYSAGI (172 aa)) is required for DNA-binding and transcriptional repression. One can recognise a POU-specific domain in the interval 250–327 (DVDADPRDLE…ILQAWLEEAE (78 aa)). The segment at residues 345-404 (KKRKRTSIAAPEKRSLEAYFAIQPRPSSEKIAAIAEKLDLKKNVVRVWFCNQRQKQKRMK) is a DNA-binding region (homeobox).

Belongs to the POU transcription factor family. Class-4 subfamily. Interacts with POU4F1; this interaction inhibits both POU4F1 DNA-binding and transcriptional activities. Interacts (C-terminus) with ESR1 (via DNA-binding domain); this interaction increases the estrogen receptor ESR1 transcriptional activity in a DNA- and ligand 17-beta-estradiol-independent manner. Interacts (via C-terminus) with TP53 (via N-terminus). Interacts with DLX1 (via homeobox DNA-binding domain); this interaction suppresses DLX1-mediated transcriptional activity in postnatal retina enhancing retinal ganglion cell (RGC) differentiation. Interacts with DLX2 (via homeobox DNA-binding domain); this interaction enhances RGC differentiation. Interacts (via C-terminus) with ISL1 (via C-terminus). Interacts with ISL2. Interacts with LHX2. Expressed in the brain. Expressed in the ganglion cell layer of the retina.

The protein localises to the nucleus. It is found in the nucleus speckle. Its subcellular location is the cytoplasm. Tissue-specific DNA-binding transcription factor involved in the development and differentiation of target cells. Functions either as activator or repressor modulating the rate of target gene transcription through RNA polymerase II enzyme in a promoter-dependent manner. Binds to the consensus octamer motif 5'-AT[A/T]A[T/A]T[A/T]A-3' of promoter of target genes. Plays a fundamental role in the gene regulatory network essential for retinal ganglion cell (RGC) differentiation. Binds to an octamer site to form a ternary complex with ISL1; cooperates positively with ISL1 and ISL2 to potentiate transcriptional activation of RGC target genes being involved in RGC fate commitment in the developing retina and RGC axon formation and pathfinding. Inhibits DLX1 and DLX2 transcriptional activities preventing DLX1- and DLX2-mediated ability to promote amacrine cell fate specification. In cooperation with TP53 potentiates transcriptional activation of BAX promoter activity increasing neuronal cell apoptosis. Negatively regulates BAX promoter activity in the absence of TP53. Acts as a transcriptional coactivator via its interaction with the transcription factor ESR1 by enhancing its effect on estrogen response element (ERE)-containing promoter. Antagonizes the transcriptional stimulatory activity of POU4F1 by preventing its binding to an octamer motif. Involved in TNFSF11-mediated terminal osteoclast differentiation. The chain is POU domain, class 4, transcription factor 2 from Homo sapiens (Human).